The sequence spans 455 residues: Adenylosuccinate synthetase isozyme 2 (455 aa).

The segment at 1–25 (MSDSGDAQPQDGGNSSSSRGKSPSV) is disordered. A compositionally biased stretch (low complexity) spans 12–25 (GGNSSSSRGKSPSV). GTP contacts are provided by residues 38–44 (GDEGKGK) and 66–68 (GHT). Aspartate 39 acts as the Proton acceptor in catalysis. Mg(2+) contacts are provided by aspartate 39 and glycine 66. Aspartate 39 lines the substrate pocket. Residues 39–42 (DEGK), 64–67 (NAGH), threonine 161, arginine 175, asparagine 254, threonine 269, and arginine 333 each bind IMP. The Proton donor role is filled by histidine 67. 329-335 (VTTGRKR) contacts substrate. Residues arginine 335, 361 to 363 (KLD), and 443 to 446 (GVGK) contribute to the GTP site.

It belongs to the adenylosuccinate synthetase family. In terms of assembly, homodimer. Requires Mg(2+) as cofactor.

Its subcellular location is the cytoplasm. It is found in the mitochondrion. It carries out the reaction IMP + L-aspartate + GTP = N(6)-(1,2-dicarboxyethyl)-AMP + GDP + phosphate + 2 H(+). It functions in the pathway purine metabolism; AMP biosynthesis via de novo pathway; AMP from IMP: step 1/2. Its activity is regulated as follows. Inhibited competitively by AMP and IMP and non-competitively by fructose 1,6-bisphosphate. Its function is as follows. Plays an important role in the de novo pathway and in the salvage pathway of purine nucleotide biosynthesis. Catalyzes the first committed step in the biosynthesis of AMP from IMP. The chain is Adenylosuccinate synthetase isozyme 2 (adss2) from Danio rerio (Zebrafish).